Reading from the N-terminus, the 1503-residue chain is ATP-binding cassette sub-family C member 6 (1503 aa).

Residues 1 to 31 lie on the Extracellular side of the membrane; it reads MAAPAEPCAGQGVWNQTEPEPAATSLLSLCF. Asn15 carries an N-linked (GlcNAc...) asparagine glycan. Residues 32–52 form a helical membrane-spanning segment; sequence LRTAGVWVPPMYLWVLGPIYL. Residues 53–72 lie on the Cytoplasmic side of the membrane; the sequence is LFIHHHGRGYLRMSPLFKAK. A helical transmembrane segment spans residues 73 to 93; it reads MVLGFALIVLCTSSVAVALWK. Over 94-98 the chain is Extracellular; it reads IQQGT. A helical transmembrane segment spans residues 99-119; sequence PEAPEFLIHPTVWLTTMSFAV. Residues 120-131 are Cytoplasmic-facing; that stretch reads FLIHTERKKGVQ. A helical membrane pass occupies residues 132 to 149; the sequence is SSGVLFGYWLLCFVLPAT. The Extracellular portion of the chain corresponds to 150–167; that stretch reads NAAQQASGAGFQSDPVRH. A helical membrane pass occupies residues 168-188; the sequence is LSTYLCLSLVVAQFVLSCLAD. The Cytoplasmic portion of the chain corresponds to 189–302; the sequence is QPPFFPEDPQ…GSQWRPLLKA (114 aa). The helical transmembrane segment at 303 to 323 threads the bilayer; that stretch reads IWQVFHSTFLLGTLSLIISDV. One can recognise an ABC transmembrane type-1 1 domain in the interval 311-593; the sequence is FLLGTLSLII…LPFSIHSLVQ (283 aa). Residues 324-349 are Extracellular-facing; it reads FRFTVPKLLSLFLEFIGDPKPPAWKG. Residues 350 to 370 form a helical membrane-spanning segment; that stretch reads YLLAVLMFLSACLQTLFEQQN. Over 371–426 the chain is Cytoplasmic; the sequence is MYRLKVLQMRLRSAITGLVYRKVLALSSGSRKASAVGDVVNLVSVDVQRLTESVLY. The helical transmembrane segment at 427–447 threads the bilayer; sequence LNGLWLPLVWIVVCFVYLWQL. Over 448–450 the chain is Extracellular; sequence LGP. The helical transmembrane segment at 451–471 threads the bilayer; that stretch reads SALTAIAVFLSLLPLNFFISK. Topologically, residues 472–533 are cytoplasmic; sequence KRNHHQEEQM…ALRTSGLLFS (62 aa). A helical membrane pass occupies residues 534–554; the sequence is VSLVSFQVSTFLVALVVFAVH. The Extracellular segment spans residues 555–575; that stretch reads TLVAENAMNAEKAFVTLTVLN. The chain crosses the membrane as a helical span at residues 576 to 596; sequence ILNKAQAFLPFSIHSLVQARV. Over 597 to 939 the chain is Cytoplasmic; it reads SFDRLVTFLC…VKATVHLAYL (343 aa). In terms of domain architecture, ABC transporter 1 spans 629–853; it reads ITIHSATFAW…KGALMCLLDQ (225 aa). 663–670 serves as a coordination point for ATP; the sequence is GPVGAGKS. Positions 854 to 919 are disordered; sequence ARQPGDRGEG…LDDPDRAGWP (66 aa). A compositionally biased stretch (basic and acidic residues) spans 881–901; that stretch reads RRPELRRERSIKSVPEKDRTT. The helical transmembrane segment at 940-960 threads the bilayer; the sequence is RAVGTPLCLYALFLFLCQQVA. The 282-residue stretch at 947-1228 folds into the ABC transmembrane type-1 2 domain; it reads CLYALFLFLC…VVRNWTDLEN (282 aa). The Extracellular portion of the chain corresponds to 961–997; sequence SFCRGYWLSLWADDPAVGGQQTQAALRGGIFGLLGCL. A helical transmembrane segment spans residues 998–1018; the sequence is QAIGLFASMAAVLLGGARASR. At 1019-1061 the chain is on the cytoplasmic side; that stretch reads LLFQRLLWDVVRSPISFFERTPIGHLLNRFSKETDTVDVDIPD. A helical membrane pass occupies residues 1062–1082; sequence KLRSLLMYAFGLLEVSLVVAV. Position 1083 (Ala1083) is a topological domain, extracellular. Residues 1084 to 1104 form a helical membrane-spanning segment; it reads TPLATVAILPLFLLYAGFQSL. Topologically, residues 1105–1175 are cytoplasmic; that stretch reads YVVSSCQLRR…VADRWLAANV (71 aa). A helical transmembrane segment spans residues 1176–1196; the sequence is ELLGNGLVFAAATCAVLSKAH. The Extracellular portion of the chain corresponds to 1197 to 1198; the sequence is LS. Residues 1199 to 1219 traverse the membrane as a helical segment; it reads AGLVGFSVSAALQVTQTLQWV. The Cytoplasmic portion of the chain corresponds to 1220–1503; that stretch reads VRNWTDLENS…YRLAQESGLV (284 aa). Residues 1265–1499 form the ABC transporter 2 domain; the sequence is IEFRDFGLRY…KGLFYRLAQE (235 aa). At Ser1286 the chain carries Phosphoserine. 1299–1306 is a binding site for ATP; it reads GRTGAGKS.

It belongs to the ABC transporter superfamily. ABCC family. Conjugate transporter (TC 3.A.1.208) subfamily. Requires Mg(2+) as cofactor. In terms of processing, glycosylated. Expressed in kidney and liver. Very low expression in other tissues. In testis, localized to peritubular myoid cells, Leydig cells, along the basal membrane of Sertoli cells and moderately in the adluminal compartment of the seminiferous tubules.

The protein localises to the basal cell membrane. It localises to the basolateral cell membrane. Its subcellular location is the endoplasmic reticulum membrane. The catalysed reaction is an S-substituted glutathione(in) + ATP + H2O = an S-substituted glutathione(out) + ADP + phosphate + H(+). It catalyses the reaction leukotriene C4(in) + ATP + H2O = leukotriene C4(out) + ADP + phosphate + H(+). Its activity is regulated as follows. LTC4 transport is completely inhibited by 1 mM orthovanadate. ATP-dependent transporter of the ATP-binding cassette (ABC) family that actively extrudes physiological compounds, and xenobiotics from cells. Mediates ATP-dependent transport of glutathione conjugates such as leukotriene-c4 (LTC4) and N-ethylmaleimide S-glutathione (NEM-GS) (in vitro), and an anionic cyclopentapeptide endothelin antagonist, BQ-123. May contribute to regulate the transport of organic compounds in testes across the blood-testis-barrier. Does not appear to actively transport drugs outside the cell. Confers low levels of cellular resistance to etoposide, teniposide, anthracyclines and cisplatin. Functionally, mediates the release of nucleoside triphosphates, predominantly ATP, into the circulation, where it is rapidly converted into AMP and the mineralization inhibitor inorganic pyrophosphate (PPi) by the ecto-enzyme ectonucleotide pyrophosphatase phosphodiesterase 1 (ENPP1), therefore playing a role in PPi homeostasis. Its function is as follows. Inhibits TNF-alpha-mediated apoptosis through blocking one or more caspases. The sequence is that of ATP-binding cassette sub-family C member 6 (ABCC6) from Homo sapiens (Human).